The chain runs to 596 residues: Mitoguardin 2 (596 aa).

Helical transmembrane passes span 11 to 31 (IMQALAMTVAEIPVFLYSTFG) and 40 to 60 (LSPSLKKVLFATALGSVALAL). Disordered stretches follow at residues 67-158 (RRGR…AAWE) and 576-596 (ALPKSPCQAESGNLDASGQQD). Positions 110-123 (MSPSTRSNDTLSGV) are enriched in polar residues. Residues 124–140 (SSIAQSKHSSSSHSIAS) are compositionally biased toward low complexity. Composition is skewed to polar residues over residues 143–152 (VPSSPNQSVN) and 583–596 (QAESGNLDASGQQD).

The protein belongs to the mitoguardin family. Homodimer and heterodimer; forms heterodimers with miga1.

The protein localises to the mitochondrion outer membrane. Its function is as follows. Regulator of mitochondrial fusion: acts by forming homo- and heterodimers at the mitochondrial outer membrane and facilitating the formation of pld6/MitoPLD dimers. May act by regulating phospholipid metabolism via pld6/MitoPLD. This is Mitoguardin 2 from Danio rerio (Zebrafish).